An 87-amino-acid polypeptide reads, in one-letter code: UPF0250 protein BUsg_472 (87 aa).

Belongs to the UPF0250 family.

In Buchnera aphidicola subsp. Schizaphis graminum (strain Sg), this protein is UPF0250 protein BUsg_472.